A 299-amino-acid chain; its full sequence is Taste receptor type 2 member 4 (299 aa).

Residues 1–9 lie on the Extracellular side of the membrane; that stretch reads MLRLFYFSA. Residues 10–30 form a helical membrane-spanning segment; that stretch reads IIASVILNFVGIIMNLFITVV. Residues 31 to 46 are Cytoplasmic-facing; that stretch reads NCKTWVKSHRISSSDR. Residues 47-67 traverse the membrane as a helical segment; sequence ILFSLGITRFLMLGLFLVNTI. The Extracellular segment spans residues 68–81; it reads YFVSSNTERSVYLS. A helical membrane pass occupies residues 82-102; sequence AFFVLCFMFLDSSSLWFVTLL. Topologically, residues 103-131 are cytoplasmic; that stretch reads NILYCVKITNFQHSVFLLLKRNISPKIPR. Residues 132–152 traverse the membrane as a helical segment; that stretch reads LLLACVLISAFTTCLYITLSQ. Residues 153–172 lie on the Extracellular side of the membrane; the sequence is ASPFPELVTTRNNTSFNINE. N-linked (GlcNAc...) asparagine glycans are attached at residues asparagine 164 and asparagine 165. A helical membrane pass occupies residues 173–193; it reads GILSLVVSLVLSSSLQFIINV. Residues 194 to 230 lie on the Cytoplasmic side of the membrane; that stretch reads TSASLLIHSLRRHIQKMQKNATGFWNPQTEAHVGAMK. Residues 231-251 traverse the membrane as a helical segment; sequence LMVYFLILYIPYSVATLVQYL. Topologically, residues 252-262 are extracellular; the sequence is PFYAGMDMGTK. A helical transmembrane segment spans residues 263-283; that stretch reads SICLIFATLYSPGHSVLIIIT. Residues 284–299 are Cytoplasmic-facing; it reads HPKLKTTAKKILCFKK.

The protein belongs to the G-protein coupled receptor T2R family.

The protein resides in the membrane. It localises to the cell projection. Its subcellular location is the cilium membrane. Gustducin-coupled receptor implicated in the perception of bitter compounds in the oral cavity and the gastrointestinal tract. Signals through PLCB2 and the calcium-regulated cation channel TRPM5. In airway epithelial cells, binding of denatonium increases the intracellular calcium ion concentration and stimulates ciliary beat frequency. The chain is Taste receptor type 2 member 4 (TAS2R4) from Pan paniscus (Pygmy chimpanzee).